The sequence spans 145 residues: Ribosomal RNA large subunit methyltransferase H (145 aa).

S-adenosyl-L-methionine contacts are provided by residues Leu64, Gly93, and 112 to 117; that span reads LSPLTF.

It belongs to the RNA methyltransferase RlmH family. Homodimer.

Its subcellular location is the cytoplasm. The catalysed reaction is pseudouridine(1915) in 23S rRNA + S-adenosyl-L-methionine = N(3)-methylpseudouridine(1915) in 23S rRNA + S-adenosyl-L-homocysteine + H(+). Specifically methylates the pseudouridine at position 1915 (m3Psi1915) in 23S rRNA. The sequence is that of Ribosomal RNA large subunit methyltransferase H from Prochlorococcus marinus (strain NATL1A).